The following is a 937-amino-acid chain: Protocadherin alpha-7 (937 aa).

Residues 1–29 (MVNLRGYNWKSQQLLLFLIIVAAWEAGSG) form the signal peptide. Residues 30–697 (QLHYSVPEEA…RVDQRLVDVN (668 aa)) are Extracellular-facing. 6 consecutive Cadherin domains span residues 34–133 (SVPE…PPMF), 157–242 (ASDA…APVF), 243–350 (DRSL…APQL), 351–455 (TVSS…APLF), 456–565 (AQPE…APTL), and 587–682 (PGQV…SSKV). An intrachain disulfide couples Cys-96 to Cys-102. Residues Thr-223 and Thr-225 are each glycosylated (O-linked (Man) threonine). N-linked (GlcNAc...) asparagine glycans are attached at residues Asn-257 and Asn-265. Thr-438 carries an O-linked (Man) threonine glycan. An O-linked (Man) serine glycan is attached at Ser-478. The N-linked (GlcNAc...) asparagine glycan is linked to Asn-548. Residues 698–718 (VYLIIAICAVSSLLVLTLLLY) form a helical membrane-spanning segment. Residues 719 to 937 (TALRCSATPT…GNSTTDNSDQ (219 aa)) lie on the Cytoplasmic side of the membrane. Disordered stretches follow at residues 755–794 (RQRV…PDWR) and 816–843 (RAGP…EVSP). PXXP repeat units lie at residues 774 to 777 (PSLP), 786 to 789 (PRQP), 819 to 822 (PGGP), 860 to 863 (PGNP), and 878 to 881 (PGSP). The tract at residues 774 to 881 (PSLPQGPSST…PDKFIIPGSP (108 aa)) is 5 X 4 AA repeats of P-X-X-P. A compositionally biased stretch (polar residues) spans 775 to 787 (SLPQGPSSTDNPR). Residues 887 to 937 (RQEPANNQIDKSDFITFGKKEETKKKKKKKKGNKTQEKKEKGNSTTDNSDQ) form a disordered region. Over residues 896 to 910 (DKSDFITFGKKEETK) the composition is skewed to basic and acidic residues.

In terms of assembly, forms homodimers in trans (molecules expressed by two different cells). Forms promiscuous heterodimers in cis (at the plasma membrane of the same cell) with other protocadherins.

It is found in the cell membrane. In terms of biological role, calcium-dependent cell-adhesion protein involved in cells self-recognition and non-self discrimination. Thereby, it is involved in the establishment and maintenance of specific neuronal connections in the brain. This chain is Protocadherin alpha-7, found in Mus musculus (Mouse).